We begin with the raw amino-acid sequence, 131 residues long: Holo-[acyl-carrier-protein] synthase (131 aa).

Mg(2+) contacts are provided by aspartate 8 and glutamate 57.

It belongs to the P-Pant transferase superfamily. AcpS family. It depends on Mg(2+) as a cofactor.

It localises to the cytoplasm. The enzyme catalyses apo-[ACP] + CoA = holo-[ACP] + adenosine 3',5'-bisphosphate + H(+). Transfers the 4'-phosphopantetheine moiety from coenzyme A to a Ser of acyl-carrier-protein. This chain is Holo-[acyl-carrier-protein] synthase, found in Desulforudis audaxviator (strain MP104C).